The sequence spans 419 residues: Carbohydrate sulfotransferase 12 (419 aa).

At 1–5 the chain is on the cytoplasmic side; that stretch reads MTKPR. A helical; Signal-anchor for type II membrane protein transmembrane segment spans residues 6 to 26; the sequence is LFRLWLVLGSALMILLIIVYW. Over 27-419 the chain is Lumenal; the sequence is DNVGTAHFYL…YPKPENLLRD (393 aa). Basic and acidic residues predominate over residues 78–87; sequence HNDLSRRKTE. The segment at 78–99 is disordered; it reads HNDLSRRKTEQPPVPAPSKPVL. Asn139 is a glycosylation site (N-linked (GlcNAc...) asparagine). Position 176–182 (176–182) interacts with 3'-phosphoadenylyl sulfate; that stretch reads PKVACTN. Asn214 carries an N-linked (GlcNAc...) asparagine glycan. Residue 250–258 participates in 3'-phosphoadenylyl sulfate binding; that stretch reads RDPFVRLIS. N-linked (GlcNAc...) asparagine glycosylation is found at Asn285 and Asn375.

This sequence belongs to the sulfotransferase 2 family.

The protein localises to the golgi apparatus membrane. It carries out the reaction chondroitin beta-D-glucuronate + n 3'-phosphoadenylyl sulfate = chondroitin 4'-sulfate + n adenosine 3',5'-bisphosphate + n H(+). Catalyzes the transfer of sulfate to position 4 of the N-acetylgalactosamine (GalNAc) residue of chondroitin and desulfated dermatan sulfate. Chondroitin sulfate constitutes the predominant proteoglycan present in cartilage and is distributed on the surfaces of many cells and extracellular matrices. Activity toward partially desulfated dermatan sulfate is however lower. Does not form 4, 6-di-O-sulfated GalNAc when chondroitin sulfate C is used as an acceptor. This chain is Carbohydrate sulfotransferase 12 (Chst12), found in Mus musculus (Mouse).